A 426-amino-acid polypeptide reads, in one-letter code: Serine hydroxymethyltransferase (426 aa).

Residues Leu118 and 122–124 (GHL) contribute to the (6S)-5,6,7,8-tetrahydrofolate site. Residue Lys227 is modified to N6-(pyridoxal phosphate)lysine.

The protein belongs to the SHMT family. Homodimer. Pyridoxal 5'-phosphate is required as a cofactor.

It is found in the cytoplasm. It carries out the reaction (6R)-5,10-methylene-5,6,7,8-tetrahydrofolate + glycine + H2O = (6S)-5,6,7,8-tetrahydrofolate + L-serine. The protein operates within one-carbon metabolism; tetrahydrofolate interconversion. It functions in the pathway amino-acid biosynthesis; glycine biosynthesis; glycine from L-serine: step 1/1. In terms of biological role, catalyzes the reversible interconversion of serine and glycine with tetrahydrofolate (THF) serving as the one-carbon carrier. This reaction serves as the major source of one-carbon groups required for the biosynthesis of purines, thymidylate, methionine, and other important biomolecules. Also exhibits THF-independent aldolase activity toward beta-hydroxyamino acids, producing glycine and aldehydes, via a retro-aldol mechanism. This chain is Serine hydroxymethyltransferase, found in Mycolicibacterium paratuberculosis (strain ATCC BAA-968 / K-10) (Mycobacterium paratuberculosis).